A 39-amino-acid polypeptide reads, in one-letter code: Adipokinetic prohormone type 2 (39 aa).

A Pyrrolidone carboxylic acid modification is found at Gln-1. Trp-8 is modified (tryptophan amide).

This sequence belongs to the AKH/HRTH/RPCH family. In terms of assembly, adipokinetic hormone precursor-related peptide (APRP) can form three type of disulfide-bond dimers: p1 (alpha-alpha), p2 (alpha-beta), and p3 (beta-beta).

Its subcellular location is the secreted. In terms of biological role, this hormone, released from cells in the corpora cardiaca, causes release of diglycerides from the fat body and stimulation of muscles to use these diglycerides as an energy source during energy-demanding processes. This Schistocerca gregaria (Desert locust) protein is Adipokinetic prohormone type 2.